We begin with the raw amino-acid sequence, 70 residues long: Guanine nucleotide-binding protein G(I)/G(S)/G(O) subunit gamma-8 (70 aa).

C67 is modified (cysteine methyl ester). C67 is lipidated: S-geranylgeranyl cysteine. The propeptide at 68-70 is removed in mature form; the sequence is TLL.

Belongs to the G protein gamma family. In terms of assembly, g proteins are composed of 3 units, alpha, beta and gamma. As to expression, detected in the olfactory epithelium, the vomeronasal epithelium and, to a lesser extent, the olfactory bulb.

It localises to the cell membrane. Guanine nucleotide-binding proteins (G proteins) are involved as a modulator or transducer in various transmembrane signaling systems. The beta and gamma chains are required for the GTPase activity, for replacement of GDP by GTP, and for G protein-effector interaction. This subunit may have a very specific role in the development and turnover of olfactory and vomeronasal neurons. The chain is Guanine nucleotide-binding protein G(I)/G(S)/G(O) subunit gamma-8 (Gng8) from Rattus norvegicus (Rat).